Reading from the N-terminus, the 485-residue chain is Alpha,alpha-trehalose-phosphate synthase [UDP-forming] (485 aa).

D-glucose 6-phosphate contacts are provided by Tyr99 and Asp153. UDP-binding residues include Arg290 and Lys295. The UDP-alpha-D-glucose site is built by Arg290 and Lys295. Residue Arg328 participates in D-glucose 6-phosphate binding. Residues Ile367 and 393–397 (LVSYE) contribute to the UDP site. UDP-alpha-D-glucose is bound by residues Ile367 and 389-397 (DGMNLVSYE).

It belongs to the glycosyltransferase 20 family.

The enzyme catalyses D-glucose 6-phosphate + UDP-alpha-D-glucose = alpha,alpha-trehalose 6-phosphate + UDP + H(+). The protein operates within carbohydrate biosynthesis. Synthase catalytic subunit of the trehalose synthase complex that catalyzes the production of trehalose from glucose-6-phosphate and UDP-alpha-D-glucose in a two step process. In Zygosaccharomyces rouxii, this protein is Alpha,alpha-trehalose-phosphate synthase [UDP-forming].